The sequence spans 375 residues: Ribonuclease D (375 aa).

The region spanning 3 to 169 is the 3'-5' exonuclease domain; it reads YQMITTDDAL…LPITAKLMVE (167 aa). Residues 210–289 enclose the HRDC domain; sequence RTRQLACLQL…EKAQTLPEDA (80 aa).

This sequence belongs to the RNase D family. A divalent metal cation serves as cofactor.

The protein localises to the cytoplasm. It carries out the reaction Exonucleolytic cleavage that removes extra residues from the 3'-terminus of tRNA to produce 5'-mononucleotides.. Its function is as follows. Exonuclease involved in the 3' processing of various precursor tRNAs. Initiates hydrolysis at the 3'-terminus of an RNA molecule and releases 5'-mononucleotides. The sequence is that of Ribonuclease D from Escherichia coli (strain K12).